The chain runs to 91 residues: Cell division topological specificity factor (91 aa).

It belongs to the MinE family.

Functionally, prevents the cell division inhibition by proteins MinC and MinD at internal division sites while permitting inhibition at polar sites. This ensures cell division at the proper site by restricting the formation of a division septum at the midpoint of the long axis of the cell. The polypeptide is Cell division topological specificity factor (Desulfitobacterium hafniense (strain DSM 10664 / DCB-2)).